The primary structure comprises 492 residues: Transmembrane protein 104 homolog (492 aa).

Over 1 to 18 (MQSNTDSSGTSGTYSQTV) the chain is Cytoplasmic. A helical membrane pass occupies residues 19 to 39 (GLLYVFNLIVGTGALALPKAF). The Extracellular segment spans residues 40–45 (QSAGWL). The chain crosses the membrane as a helical span at residues 46 to 66 (LSISLLTFSAFMSYVAATFVI). The Cytoplasmic portion of the chain corresponds to 67-114 (EALSVANAVLSKKRRVEYDDVVVADGPSTFEIAKKVEVSEMASMFLSK). The helical transmembrane segment at 115–135 (VSLVFSYFAIIIYLFGDLAIY) threads the bilayer. Residues 136–177 (STTVPKSAMNIVCSTINATIVKSSDPCHESWPEILTRMTVYR) are Extracellular-facing. N-linked (GlcNAc...) asparagine glycosylation occurs at asparagine 152. The helical transmembrane segment at 178-198 (FFVIVFVVVVCLPMVIAGITK) threads the bilayer. Over 199–210 (TRHIQIMTTLSR) the chain is Cytoplasmic. Residues 211–231 (WAAFILMISLATMQLSSQGAA) form a helical membrane-spanning segment. Over 232 to 238 (AHPPAYN) the chain is Extracellular. A helical transmembrane segment spans residues 239–259 (FHGFGSLFGCAVYAFMCHHSI). Over 260 to 275 (PSLITPMRTKENVFGK) the chain is Cytoplasmic. Residues 276–296 (IAVVYGIVGVFYFTLSLTGAF) form a helical membrane-spanning segment. Residues 297-325 (AFEHVQDIYTLNFLHDDNTSLVYSIIDYF) are Extracellular-facing. N-linked (GlcNAc...) asparagine glycosylation occurs at asparagine 314. A helical transmembrane segment spans residues 326 to 346 (LALFPIITLTSSYPIIALTLI). Residues 347–391 (NNFKVVKDILCPKTGQENESLLEADNQVEDNDTDDEREARNGNPK) are Cytoplasmic-facing. The span at 367 to 382 (LLEADNQVEDNDTDDE) shows a compositional bias: acidic residues. A disordered region spans residues 367–387 (LLEADNQVEDNDTDDEREARN). Residues 392–412 (TIFDVLVPTLVLALPTFLSLL) traverse the membrane as a helical segment. Residues 413 to 415 (TDD) are Extracellular-facing. The helical transmembrane segment at 416–436 (MLLLASITGSFPGVAVQFAIP) threads the bilayer. The Cytoplasmic portion of the chain corresponds to 437 to 466 (CLLVTAARKHARSVLNFPVPRKNNSPFQSR). A helical transmembrane segment spans residues 467 to 487 (FWIMLISSWAGFSMIMVLLNL). Topologically, residues 488–492 (VGVKF) are extracellular.

It belongs to the TMEM104 family.

It localises to the membrane. This chain is Transmembrane protein 104 homolog, found in Caenorhabditis briggsae.